The chain runs to 473 residues: Photosystem II CP43 reaction center protein (473 aa).

The propeptide occupies 1-14 (MKTLYSLRRFYPVE). The residue at position 15 (T15) is an N-acetylthreonine. Position 15 is a phosphothreonine (T15). Helical transmembrane passes span 69–93 (LFEV…PHLA), 134–155 (LLGP…KDRN), 178–200 (KALY…RKIT), 255–275 (KPFA…LSYS), and 291–312 (WFNN…ASQA). Residue E367 participates in [CaMn4O5] cluster binding. The chain crosses the membrane as a helical span at residues 447-471 (RARAAAAGFEKGIDRDFEPVLSMTP).

This sequence belongs to the PsbB/PsbC family. PsbC subfamily. PSII is composed of 1 copy each of membrane proteins PsbA, PsbB, PsbC, PsbD, PsbE, PsbF, PsbH, PsbI, PsbJ, PsbK, PsbL, PsbM, PsbT, PsbX, PsbY, PsbZ, Psb30/Ycf12, at least 3 peripheral proteins of the oxygen-evolving complex and a large number of cofactors. It forms dimeric complexes. Binds multiple chlorophylls and provides some of the ligands for the Ca-4Mn-5O cluster of the oxygen-evolving complex. It may also provide a ligand for a Cl- that is required for oxygen evolution. PSII binds additional chlorophylls, carotenoids and specific lipids. is required as a cofactor.

It is found in the plastid. It localises to the chloroplast thylakoid membrane. In terms of biological role, one of the components of the core complex of photosystem II (PSII). It binds chlorophyll and helps catalyze the primary light-induced photochemical processes of PSII. PSII is a light-driven water:plastoquinone oxidoreductase, using light energy to abstract electrons from H(2)O, generating O(2) and a proton gradient subsequently used for ATP formation. The chain is Photosystem II CP43 reaction center protein from Amborella trichopoda.